The primary structure comprises 707 residues: 65-kDa microtubule-associated protein 3 (707 aa).

Coiled-coil stretches lie at residues 49–84, 157–179, 269–289, 354–374, and 464–486; these read LEVYRRKVDQANRCRAQLRQAIADAEAQLAAICSAM, NLSMRKLEELHCQLQVLQKEKID, QQEYQHITCNIAASEHEITEA, IVDATMVLEHLEQHISKIKEE, and LEEYNILRQEREEEHRRQRDQKK. Positions 495 to 574 are disordered; that stretch reads QEALYGSKPS…PSRKQSMNPS (80 aa). The span at 500–512 shows a compositional bias: low complexity; it reads GSKPSPSKPLGGK. 2 positions are modified to phosphoserine: Ser-504 and Ser-528.

This sequence belongs to the MAP65/ASE1 family. As to quaternary structure, forms a dimer. Binds to microtubules (MT) during cell division. Bundles polymerized MT via the formation of 25-nm crossbridges with centrally located endocytic MT, and midline phragmoplast MT. In terms of tissue distribution, expressed in all tissues enriched in dividing cells, such as the root and shoot apical meristem, foliar primordia, and young leaves, and embryos.

It is found in the nucleus. The protein localises to the cytoplasm. It localises to the cytoskeleton. The protein resides in the phragmoplast. Functionally, microtubule-associated protein that plays a critical role in organizing the mitotic microtubule array during both early and late mitosis in all plant organs. Essential for the cytokinesis, especially in roots, by maintaining the integrity of the overlapped microtubules in the phragmoplast. Required during root morphogenesis. Needed for giant cell development during root knot nematode infection, where cytokinesis is initiated but not completed. The chain is 65-kDa microtubule-associated protein 3 (MAP65-3) from Arabidopsis thaliana (Mouse-ear cress).